The chain runs to 186 residues: Elongation factor P (186 aa).

It belongs to the elongation factor P family.

Its subcellular location is the cytoplasm. It participates in protein biosynthesis; polypeptide chain elongation. Its function is as follows. Involved in peptide bond synthesis. Stimulates efficient translation and peptide-bond synthesis on native or reconstituted 70S ribosomes in vitro. Probably functions indirectly by altering the affinity of the ribosome for aminoacyl-tRNA, thus increasing their reactivity as acceptors for peptidyl transferase. This chain is Elongation factor P, found in Prochlorococcus marinus (strain MIT 9515).